The chain runs to 847 residues: E4 SUMO-protein ligase PIAL1 (847 aa).

The tract at residues 113–271 (VNSPVTLISQ…EVVGSNSDCD (159 aa)) is interacting domain (IND), required for interaction with MOM1 and PIAL2. An SP-RING-type zinc finger spans residues 268–349 (SDCDIIEGPS…LRKILEEVGR (82 aa)). 4 residues coordinate Zn(2+): Cys-299, His-301, Cys-322, and Cys-325. 7 tandem repeats follow at residues 569–591 (QRPV…ENAD), 592–614 (QRWM…GNTN), 615–637 (QRPI…GNTD), 638–659 (HRST…GNAD), 660–682 (QRPM…GYAH), 683–705 (QRPM…GTPD), and 706–728 (QRPM…GTTD). Residues 569 to 728 (QRPVPSYIAH…LPVSYGGTTD (160 aa)) form a 7 X 23 AA approximate tandem repeats region.

The protein belongs to the PIAL protein ligase family. In terms of assembly, homodimer. Interacts with MOM1 and PIAL2 to form a high molecular mass complex which mediates transcriptional gene silencing at heterochromatin regions. Expressed in leaves, stems and flowers, and, at low levels, in siliques and old leaves.

The protein resides in the nucleus. The protein operates within protein modification; protein sumoylation. Its function is as follows. Together with MOM1 and PIAL2, regulates transcriptional gene silencing (TGS) independently of changes in DNA methylation. E4-type SUMO ligase that promotes SUMO chain formation in a SCE1-dependent manner and thus contributes to a pathway for proteolytic removal of sumoylation substrates. Involved in stress responses (e.g. osmotic, salt and abscisic acid ABA) and sulfur metabolism. The chain is E4 SUMO-protein ligase PIAL1 from Arabidopsis thaliana (Mouse-ear cress).